Here is a 150-residue protein sequence, read N- to C-terminus: Transcriptional repressor NrdR (150 aa).

The segment at 3 to 34 is a zinc-finger region; the sequence is CPFCGYEETKVLDSRPVSNGTSIRRRRECLQC. The ATP-cone domain maps to 49–139; that stretch reads IRIIKKDGRR…VYKEFRDLDS (91 aa).

Belongs to the NrdR family. It depends on Zn(2+) as a cofactor.

In terms of biological role, negatively regulates transcription of bacterial ribonucleotide reductase nrd genes and operons by binding to NrdR-boxes. This is Transcriptional repressor NrdR from Petrotoga mobilis (strain DSM 10674 / SJ95).